We begin with the raw amino-acid sequence, 74 residues long: Protein kish-B (74 aa).

Residues Met-1–Ala-22 form the signal peptide. Topologically, residues Tyr-23–Gly-52 are extracellular. The chain crosses the membrane as a helical span at residues Thr-53–Ile-73. Position 74 (Lys-74) is a topological domain, cytoplasmic.

This sequence belongs to the KISH family.

It localises to the golgi apparatus membrane. Its function is as follows. Involved in the early part of the secretory pathway. This chain is Protein kish-B (TMEM167B), found in Bos taurus (Bovine).